A 329-amino-acid polypeptide reads, in one-letter code: Ribosomal protein L11 methyltransferase (329 aa).

S-adenosyl-L-methionine is bound by residues T177, G198, D220, and N264.

The protein belongs to the methyltransferase superfamily. PrmA family.

The protein resides in the cytoplasm. The catalysed reaction is L-lysyl-[protein] + 3 S-adenosyl-L-methionine = N(6),N(6),N(6)-trimethyl-L-lysyl-[protein] + 3 S-adenosyl-L-homocysteine + 3 H(+). Its function is as follows. Methylates ribosomal protein L11. The chain is Ribosomal protein L11 methyltransferase from Helicobacter acinonychis (strain Sheeba).